The chain runs to 298 residues: Probable 2-(5''-triphosphoribosyl)-3'-dephosphocoenzyme-A synthase 2 (298 aa).

It belongs to the CitG/MdcB family.

It carries out the reaction 3'-dephospho-CoA + ATP = 2'-(5''-triphospho-alpha-D-ribosyl)-3'-dephospho-CoA + adenine. In Salmonella choleraesuis (strain SC-B67), this protein is Probable 2-(5''-triphosphoribosyl)-3'-dephosphocoenzyme-A synthase 2.